We begin with the raw amino-acid sequence, 85 residues long: Phosphocarrier protein HPr (85 aa).

The region spanning 1–85 is the HPr domain; sequence MFQQEVTITA…HLVKLMAELE (85 aa). Histidine 15 functions as the Pros-phosphohistidine intermediate in the catalytic mechanism.

Its subcellular location is the cytoplasm. General (non sugar-specific) component of the phosphoenolpyruvate-dependent sugar phosphotransferase system (sugar PTS). This major carbohydrate active-transport system catalyzes the phosphorylation of incoming sugar substrates concomitantly with their translocation across the cell membrane. The phosphoryl group from phosphoenolpyruvate (PEP) is transferred to the phosphoryl carrier protein HPr by enzyme I. Phospho-HPr then transfers it to the PTS EIIA domain. This Klebsiella pneumoniae protein is Phosphocarrier protein HPr (ptsH).